The primary structure comprises 140 residues: Nucleoside diphosphate kinase (140 aa).

ATP-binding residues include Lys-11, Phe-59, Arg-87, Thr-93, Arg-104, and Asn-114. His-117 functions as the Pros-phosphohistidine intermediate in the catalytic mechanism.

The protein belongs to the NDK family. In terms of assembly, homotetramer. Mg(2+) is required as a cofactor.

Its subcellular location is the cytoplasm. It carries out the reaction a 2'-deoxyribonucleoside 5'-diphosphate + ATP = a 2'-deoxyribonucleoside 5'-triphosphate + ADP. The enzyme catalyses a ribonucleoside 5'-diphosphate + ATP = a ribonucleoside 5'-triphosphate + ADP. Major role in the synthesis of nucleoside triphosphates other than ATP. The ATP gamma phosphate is transferred to the NDP beta phosphate via a ping-pong mechanism, using a phosphorylated active-site intermediate. In Ruegeria sp. (strain TM1040) (Silicibacter sp.), this protein is Nucleoside diphosphate kinase.